Here is a 269-residue protein sequence, read N- to C-terminus: UPF0162 protein bbp_163 (269 aa).

This sequence belongs to the UPF0162 family.

The chain is UPF0162 protein bbp_163 from Buchnera aphidicola subsp. Baizongia pistaciae (strain Bp).